Here is a 392-residue protein sequence, read N- to C-terminus: tRNA(Met) cytidine acetate ligase (392 aa).

ATP is bound by residues 7-20 (VVEYNPFHNGHQLH), G101, N162, and 187-188 (RI).

This sequence belongs to the TmcAL family.

The protein resides in the cytoplasm. It catalyses the reaction cytidine(34) in elongator tRNA(Met) + acetate + ATP = N(4)-acetylcytidine(34) in elongator tRNA(Met) + AMP + diphosphate. Its function is as follows. Catalyzes the formation of N(4)-acetylcytidine (ac(4)C) at the wobble position of elongator tRNA(Met), using acetate and ATP as substrates. First activates an acetate ion to form acetyladenylate (Ac-AMP) and then transfers the acetyl group to tRNA to form ac(4)C34. The protein is tRNA(Met) cytidine acetate ligase of Listeria welshimeri serovar 6b (strain ATCC 35897 / DSM 20650 / CCUG 15529 / CIP 8149 / NCTC 11857 / SLCC 5334 / V8).